A 165-amino-acid chain; its full sequence is LOB domain-containing protein 21 (165 aa).

Positions 10 to 111 (SSCAACKLLK…HDLAVARTRL (102 aa)) constitute an LOB domain.

Belongs to the LOB domain-containing protein family.

The polypeptide is LOB domain-containing protein 21 (LBD21) (Arabidopsis thaliana (Mouse-ear cress)).